Consider the following 455-residue polypeptide: MTQVMTPKTIVHELERHIIGQNDAKKAVAIALRNRWRRMQLDDEMRQEVTPKNILMIGPTGVGKTEIARRLAKLADAPFIKVEATKFTEVGYVGKDVESIIRDLVETAVKMKREEAKQKVTEKAAILAEDRILDVLIPPARASESKVGFANEPAEDAQSKKEKENKTREIFRKKIQNGELNDKEIEIEVSVAPKSIGVMGPPGMEDMTNQLQDLFSSLSSDKKKTKKMRIKDAIKLVKDEEAAKLINEEDIKARALESVEQNGIVFLDEIDKVCKKSGTSGADVSREGVQRDLLPLVEGSTVSTKYGMIKTDHILFIASGAFHVAKPSDLIPELQGRLPIRVELKSLEIEDFVRILKEPDCSILKQYIALMKTEGVELSFEEDAIRKIAEISFQVNEEVENIGARRLHTVMERLLEEISFDAPDLENKSINITTDYINEKLSGLVKNKNLSQYIL.

ATP contacts are provided by residues Ile-19, 61 to 66 (GVGKTE), Asp-268, Glu-333, and Arg-405.

It belongs to the ClpX chaperone family. HslU subfamily. A double ring-shaped homohexamer of HslV is capped on each side by a ring-shaped HslU homohexamer. The assembly of the HslU/HslV complex is dependent on binding of ATP.

Its subcellular location is the cytoplasm. Functionally, ATPase subunit of a proteasome-like degradation complex; this subunit has chaperone activity. The binding of ATP and its subsequent hydrolysis by HslU are essential for unfolding of protein substrates subsequently hydrolyzed by HslV. HslU recognizes the N-terminal part of its protein substrates and unfolds these before they are guided to HslV for hydrolysis. The chain is ATP-dependent protease ATPase subunit HslU from Francisella philomiragia subsp. philomiragia (strain ATCC 25017 / CCUG 19701 / FSC 153 / O#319-036).